Consider the following 372-residue polypeptide: Putative glutamate--cysteine ligase 2 (372 aa).

It belongs to the glutamate--cysteine ligase type 2 family. YbdK subfamily.

The enzyme catalyses L-cysteine + L-glutamate + ATP = gamma-L-glutamyl-L-cysteine + ADP + phosphate + H(+). In terms of biological role, ATP-dependent carboxylate-amine ligase which exhibits weak glutamate--cysteine ligase activity. This Cupriavidus metallidurans (strain ATCC 43123 / DSM 2839 / NBRC 102507 / CH34) (Ralstonia metallidurans) protein is Putative glutamate--cysteine ligase 2.